A 440-amino-acid polypeptide reads, in one-letter code: Gap junction gamma-2 protein (440 aa).

Topologically, residues 1–21 (MTNMSWSFLTRLLEEIHNHST) are cytoplasmic. The helical transmembrane segment at 22-42 (FVGKVWLTVLVVFRIVLTAVG) threads the bilayer. The Extracellular portion of the chain corresponds to 43–78 (GESIYSDEQSKFTCNTRQPGCDNVCYDAFAPLSHVR). A helical transmembrane segment spans residues 79-99 (FWVFQIVVISTPSVMYLGYAV). The Cytoplasmic portion of the chain corresponds to 100 to 223 (HRLARASEQE…AQLVVRAAFE (124 aa)). A disordered region spans residues 108–199 (QERRRALRRR…TPGPAGQHDG (92 aa)). Over residues 112–124 (RALRRRPGPRRLP) the composition is skewed to basic residues. Residues 150–173 (LEEDEDEEPGAPEGPGEDTEEERT) are compositionally biased toward acidic residues. A helical membrane pass occupies residues 224–244 (VAFLVGQYLLYGFEVPPFFAC). The Extracellular segment spans residues 245-264 (SRQPCPHVVDCFVSRPTEKT). Residues 265-285 (VFLLVMYVVSCLCLLLNLCEM) traverse the membrane as a helical segment. The Cytoplasmic segment spans residues 286–440 (AHLGLGSAQD…SRDGKATVWI (155 aa)). The tract at residues 368–440 (ADRDSPPCSG…SRDGKATVWI (73 aa)) is disordered. Position 372 is a phosphoserine (Ser372). A compositionally biased stretch (low complexity) spans 380 to 401 (ATSRGPPRAGGPASGTGSATSG).

Belongs to the connexin family. Gamma-type subfamily. A connexon is composed of a hexamer of connexins. Interacts with TJP1. In terms of tissue distribution, mainly expressed by oligodendrocytes in the central nervous system. Expressed in optic nerve (at protein level).

It localises to the cell membrane. The protein localises to the cell junction. Its subcellular location is the gap junction. In terms of biological role, one gap junction consists of a cluster of closely packed pairs of transmembrane channels, the connexons, through which materials of low MW diffuse from one cell to a neighboring cell. May play a role in myelination in central and peripheral nervous systems. This is Gap junction gamma-2 protein (Gjc2) from Rattus norvegicus (Rat).